The chain runs to 179 residues: Large ribosomal subunit protein uL5 (179 aa).

Belongs to the universal ribosomal protein uL5 family. Part of the 50S ribosomal subunit; part of the 5S rRNA/L5/L18/L25 subcomplex. Contacts the 5S rRNA and the P site tRNA. Forms a bridge to the 30S subunit in the 70S ribosome.

In terms of biological role, this is one of the proteins that bind and probably mediate the attachment of the 5S RNA into the large ribosomal subunit, where it forms part of the central protuberance. In the 70S ribosome it contacts protein S13 of the 30S subunit (bridge B1b), connecting the 2 subunits; this bridge is implicated in subunit movement. Contacts the P site tRNA; the 5S rRNA and some of its associated proteins might help stabilize positioning of ribosome-bound tRNAs. This chain is Large ribosomal subunit protein uL5, found in Macrococcus caseolyticus (strain JCSC5402) (Macrococcoides caseolyticum).